We begin with the raw amino-acid sequence, 268 residues long: Tryptophan synthase alpha chain (268 aa).

Residues E49 and D60 each act as proton acceptor in the active site.

This sequence belongs to the TrpA family. As to quaternary structure, tetramer of two alpha and two beta chains.

The enzyme catalyses (1S,2R)-1-C-(indol-3-yl)glycerol 3-phosphate + L-serine = D-glyceraldehyde 3-phosphate + L-tryptophan + H2O. Its pathway is amino-acid biosynthesis; L-tryptophan biosynthesis; L-tryptophan from chorismate: step 5/5. Its function is as follows. The alpha subunit is responsible for the aldol cleavage of indoleglycerol phosphate to indole and glyceraldehyde 3-phosphate. The sequence is that of Tryptophan synthase alpha chain from Escherichia coli O1:K1 / APEC.